The primary structure comprises 134 residues: uncharacterized protein (134 aa).

This sequence belongs to the ycf68 family.

The protein resides in the plastid. Its subcellular location is the chloroplast. This is an uncharacterized protein from Saccharum hybrid (Sugarcane).